A 334-amino-acid polypeptide reads, in one-letter code: Retinol dehydrogenase 13 (334 aa).

Ser2 bears the N-acetylserine mark. 45 to 51 contributes to the NADP(+) binding site; it reads GANTGIG. Residue Ser174 participates in substrate binding. Residue Tyr200 is the Proton acceptor of the active site.

It belongs to the short-chain dehydrogenases/reductases (SDR) family.

The protein resides in the mitochondrion inner membrane. It catalyses the reaction all-trans-retinol + NADP(+) = all-trans-retinal + NADPH + H(+). It participates in cofactor metabolism; retinol metabolism. In terms of biological role, retinol dehydrogenase with a clear preference for NADP. Oxidizes all-trans-retinol, but seems to reduce all-trans-retinal with much higher efficiency. Has no activity towards steroid. The sequence is that of Retinol dehydrogenase 13 (Rdh13) from Mus musculus (Mouse).